The sequence spans 271 residues: MDNRPIGLLDSGVGGLTVARELLRQLPNEEIVYIGDTRRAPYGPRSREQIIAFTWDMVNFLLSKNVKMIVMACNTATAMALEIVKEELDIPVIGVILPGASSAIQKTKTNKIGVIATQASIRSDEYHKTIARKSSAIEVLSLACPKFVSIVESNEMESEIAKRVVSESLAPLVGKIDTLILGCTHYPLLRPLIQETMGKEVRLIDSGAEAVRDISVLLNYFEINAHERKEFQHCFYTTAGVNSFREIAEKWLNIGHLHIEHAEIENFNKEK.

Residues 10-11 and 42-43 contribute to the substrate site; these read DS and YG. The Proton donor/acceptor role is filled by cysteine 73. 74–75 is a substrate binding site; the sequence is NT. Cysteine 183 serves as the catalytic Proton donor/acceptor. 184-185 lines the substrate pocket; the sequence is TH.

It belongs to the aspartate/glutamate racemases family.

The catalysed reaction is L-glutamate = D-glutamate. It functions in the pathway cell wall biogenesis; peptidoglycan biosynthesis. Its function is as follows. Provides the (R)-glutamate required for cell wall biosynthesis. This Lactococcus lactis subsp. cremoris (strain MG1363) protein is Glutamate racemase.